The sequence spans 330 residues: Aspartate--ammonia ligase (330 aa).

This sequence belongs to the class-II aminoacyl-tRNA synthetase family. AsnA subfamily.

The protein resides in the cytoplasm. The catalysed reaction is L-aspartate + NH4(+) + ATP = L-asparagine + AMP + diphosphate + H(+). It functions in the pathway amino-acid biosynthesis; L-asparagine biosynthesis; L-asparagine from L-aspartate (ammonia route): step 1/1. The polypeptide is Aspartate--ammonia ligase (Haemophilus influenzae (strain PittEE)).